The primary structure comprises 122 residues: Small ribosomal subunit protein uS13 (122 aa).

A disordered region spans residues Gly95–Lys122.

This sequence belongs to the universal ribosomal protein uS13 family. As to quaternary structure, part of the 30S ribosomal subunit. Forms a loose heterodimer with protein S19. Forms two bridges to the 50S subunit in the 70S ribosome.

Located at the top of the head of the 30S subunit, it contacts several helices of the 16S rRNA. In the 70S ribosome it contacts the 23S rRNA (bridge B1a) and protein L5 of the 50S subunit (bridge B1b), connecting the 2 subunits; these bridges are implicated in subunit movement. Contacts the tRNAs in the A and P-sites. The sequence is that of Small ribosomal subunit protein uS13 from Geotalea uraniireducens (strain Rf4) (Geobacter uraniireducens).